We begin with the raw amino-acid sequence, 399 residues long: Argininosuccinate synthase (399 aa).

An ATP-binding site is contributed by 8–16; the sequence is AYSGGLDTS. Position 87 (Y87) interacts with L-citrulline. G117 lines the ATP pocket. Residues T119, N123, and D124 each coordinate L-aspartate. N123 lines the L-citrulline pocket. R127, S175, E260, and Y272 together coordinate L-citrulline.

It belongs to the argininosuccinate synthase family. Type 1 subfamily. Homotetramer.

The protein resides in the cytoplasm. The enzyme catalyses L-citrulline + L-aspartate + ATP = 2-(N(omega)-L-arginino)succinate + AMP + diphosphate + H(+). The protein operates within amino-acid biosynthesis; L-arginine biosynthesis; L-arginine from L-ornithine and carbamoyl phosphate: step 2/3. This Rhodococcus jostii (strain RHA1) protein is Argininosuccinate synthase.